The chain runs to 41 residues: Large ribosomal subunit protein bL36 (41 aa).

It belongs to the bacterial ribosomal protein bL36 family.

The protein is Large ribosomal subunit protein bL36 of Gluconacetobacter diazotrophicus (strain ATCC 49037 / DSM 5601 / CCUG 37298 / CIP 103539 / LMG 7603 / PAl5).